Reading from the N-terminus, the 240-residue chain is UDP-2,3-diacylglucosamine hydrolase (240 aa).

Residues aspartate 8, histidine 10, aspartate 41, asparagine 79, and histidine 114 each contribute to the Mn(2+) site. Residue 79-80 (NR) coordinates substrate. Substrate-binding residues include aspartate 122, serine 160, asparagine 164, lysine 167, and histidine 195. 2 residues coordinate Mn(2+): histidine 195 and histidine 197.

It belongs to the LpxH family. Requires Mn(2+) as cofactor.

It is found in the cell inner membrane. The enzyme catalyses UDP-2-N,3-O-bis[(3R)-3-hydroxytetradecanoyl]-alpha-D-glucosamine + H2O = 2-N,3-O-bis[(3R)-3-hydroxytetradecanoyl]-alpha-D-glucosaminyl 1-phosphate + UMP + 2 H(+). It participates in glycolipid biosynthesis; lipid IV(A) biosynthesis; lipid IV(A) from (3R)-3-hydroxytetradecanoyl-[acyl-carrier-protein] and UDP-N-acetyl-alpha-D-glucosamine: step 4/6. In terms of biological role, hydrolyzes the pyrophosphate bond of UDP-2,3-diacylglucosamine to yield 2,3-diacylglucosamine 1-phosphate (lipid X) and UMP by catalyzing the attack of water at the alpha-P atom. Involved in the biosynthesis of lipid A, a phosphorylated glycolipid that anchors the lipopolysaccharide to the outer membrane of the cell. This Escherichia coli O157:H7 protein is UDP-2,3-diacylglucosamine hydrolase.